We begin with the raw amino-acid sequence, 173 residues long: Co-chaperone protein HscB (173 aa).

The region spanning 2–74 (DYFTLLGMPN…LSRAEYMLSL (73 aa)) is the J domain.

The protein belongs to the HscB family. As to quaternary structure, interacts with HscA and stimulates its ATPase activity. Interacts with IscU.

Functionally, co-chaperone involved in the maturation of iron-sulfur cluster-containing proteins. Seems to help targeting proteins to be folded toward HscA. This is Co-chaperone protein HscB from Proteus mirabilis (strain HI4320).